The primary structure comprises 564 residues: Type 2 DNA topoisomerase 6 subunit B (564 aa).

ATP contacts are provided by residues asparagine 46, aspartate 78, 99 to 100 (TK), 109 to 116 (GQQGIGIS), and lysine 471.

The protein belongs to the TOP6B family. Homodimer. Heterotetramer of two Top6A and two Top6B chains.

It carries out the reaction ATP-dependent breakage, passage and rejoining of double-stranded DNA.. Functionally, relaxes both positive and negative superturns and exhibits a strong decatenase activity. In Pyrococcus horikoshii (strain ATCC 700860 / DSM 12428 / JCM 9974 / NBRC 100139 / OT-3), this protein is Type 2 DNA topoisomerase 6 subunit B.